Reading from the N-terminus, the 233-residue chain is ATP synthase subunit a, chloroplastic (233 aa).

4 consecutive transmembrane segments (helical) span residues 27-47 (VLLITWLVLAIILTLAILGTL), 84-104 (VPFVGTLFLFIFVANWLGALI), 122-142 (DINTTVALSLLTSISYFYAGF), and 192-212 (VLCLLVPLLIPLPVMVLGIFA).

The protein belongs to the ATPase A chain family. As to quaternary structure, F-type ATPases have 2 components, CF(1) - the catalytic core - and CF(0) - the membrane proton channel. CF(1) has five subunits: alpha(3), beta(3), gamma(1), delta(1), epsilon(1). CF(0) has four main subunits: a, b, b' and c.

The protein localises to the plastid. The protein resides in the chloroplast thylakoid membrane. Functionally, key component of the proton channel; it plays a direct role in the translocation of protons across the membrane. The polypeptide is ATP synthase subunit a, chloroplastic (Ochrosphaera neapolitana).